Reading from the N-terminus, the 238-residue chain is Small ribosomal subunit protein uS2c (238 aa).

Belongs to the universal ribosomal protein uS2 family.

It is found in the plastid. It localises to the chloroplast. This is Small ribosomal subunit protein uS2c (rps2) from Jasminum nudiflorum (Winter jasmine).